Consider the following 182-residue polypeptide: MPSGPISVARQVCVARIGAPHGVRGAMRLWSFTADPLAVGDYGPLSTKDGTRSFEIATARAAKDHLVVTLKGVTTRDEAVRLNGLELYVPRDALPPTEDDEYYHADLIGLPAITTSGEPLGRVLAIHNFGAGDIIEIAPASGPTLLLPFTNAVVPTVDLAAGQVIIELPAEIEGDTPNHPEA.

One can recognise a PRC barrel domain in the interval 99 to 176 (DDEYYHADLI…ELPAEIEGDT (78 aa)).

Belongs to the RimM family. In terms of assembly, binds ribosomal protein uS19.

The protein localises to the cytoplasm. Functionally, an accessory protein needed during the final step in the assembly of 30S ribosomal subunit, possibly for assembly of the head region. Essential for efficient processing of 16S rRNA. May be needed both before and after RbfA during the maturation of 16S rRNA. It has affinity for free ribosomal 30S subunits but not for 70S ribosomes. The sequence is that of Ribosome maturation factor RimM from Rhodopseudomonas palustris (strain HaA2).